Here is a 308-residue protein sequence, read N- to C-terminus: Glycine betaine uptake system ATP-binding protein YehX (308 aa).

Residues 2–235 enclose the ABC transporter domain; that stretch reads IEFSHVSKLF…PANDFVRQFF (234 aa). Position 34 to 41 (34 to 41) interacts with ATP; the sequence is GTSGSGKS.

The protein belongs to the ABC transporter superfamily. The complex is composed of two ATP-binding proteins (YehX), two transmembrane proteins (YehW and YehY) and a solute-binding protein (YehZ).

The catalysed reaction is glycine betaine(out) + ATP + H2O = glycine betaine(in) + ADP + phosphate + H(+). Part of an ABC transporter complex involved in low-affinity glycine betaine uptake. Probably responsible for energy coupling to the transport system. In Escherichia coli (strain K12), this protein is Glycine betaine uptake system ATP-binding protein YehX (yehX).